The following is a 122-amino-acid chain: Large ribosomal subunit protein uL14 (122 aa).

The protein belongs to the universal ribosomal protein uL14 family. Part of the 50S ribosomal subunit. Forms a cluster with proteins L3 and L19. In the 70S ribosome, L14 and L19 interact and together make contacts with the 16S rRNA in bridges B5 and B8.

Binds to 23S rRNA. Forms part of two intersubunit bridges in the 70S ribosome. The protein is Large ribosomal subunit protein uL14 of Mycolicibacterium vanbaalenii (strain DSM 7251 / JCM 13017 / BCRC 16820 / KCTC 9966 / NRRL B-24157 / PYR-1) (Mycobacterium vanbaalenii).